The primary structure comprises 145 residues: Large ribosomal subunit protein uL13 (145 aa).

The protein belongs to the universal ribosomal protein uL13 family. As to quaternary structure, part of the 50S ribosomal subunit.

This protein is one of the early assembly proteins of the 50S ribosomal subunit, although it is not seen to bind rRNA by itself. It is important during the early stages of 50S assembly. The sequence is that of Large ribosomal subunit protein uL13 from Geobacillus kaustophilus (strain HTA426).